A 185-amino-acid polypeptide reads, in one-letter code: Ribosome-recycling factor (185 aa).

It belongs to the RRF family.

The protein resides in the cytoplasm. Responsible for the release of ribosomes from messenger RNA at the termination of protein biosynthesis. May increase the efficiency of translation by recycling ribosomes from one round of translation to another. The protein is Ribosome-recycling factor of Pectobacterium carotovorum subsp. carotovorum (strain PC1).